The sequence spans 204 residues: N-(5'-phosphoribosyl)anthranilate isomerase (204 aa).

The protein belongs to the TrpF family.

The catalysed reaction is N-(5-phospho-beta-D-ribosyl)anthranilate = 1-(2-carboxyphenylamino)-1-deoxy-D-ribulose 5-phosphate. It participates in amino-acid biosynthesis; L-tryptophan biosynthesis; L-tryptophan from chorismate: step 3/5. The sequence is that of N-(5'-phosphoribosyl)anthranilate isomerase from Bacillus anthracis (strain A0248).